We begin with the raw amino-acid sequence, 536 residues long: MEEPPQEALAEPLKHESPAAPSSAGHTKGQEEDDQKNQAERKADNHTAHRIADQTALRVPSQAESSIFSQATNGVAEQNGHSTPGQAGRRASNPADVSDLRADDQVNQTPSEQTKGKASSQANNVQHEQSDGQVSGLTEERTAEQTERRLPTQAERRTSGQIDGRLAMPSDQRGSRQTDHRMAGQSERRASEQMDRRMSGEAERRTSEQITHRLSKLSERRPSVQIDSGSSVPSDQSPSVQIDSGSSVPSDQRPSVQIDRRMSGKVRRRSSEKTDYRLAGLADPGTSEQTDLRLYGLVDHKTSVKTHHQVYGQATELAEHQAIDQAHSNADQPPVDNAHYTESDQTDHLADRQANHKDQLSYYETRGQSEDRIFPQLGNSKEDKEADYRVQPCKFEDSQVDLNSKPSVEMETQNATTIPPYNPVDARFTSNFQAKDQALFPRLPSISSKLNYTSSQEKTQAIVTKSDEFSEIDQGKGYHIRNQTYRRFPSIVYEDPYQVSLQYMEKHHILQIFQQITENLVYEKPEDPLNFMLCQV.

The segment covering 1 to 11 (MEEPPQEALAE) has biased composition (low complexity). Disordered regions lie at residues 1–287 (MEEP…PGTS) and 328–348 (SNAD…QTDH). Over residues 35-52 (QKNQAERKADNHTAHRIA) the composition is skewed to basic and acidic residues. Polar residues-rich tracts occupy residues 62–85 (QAES…STPG) and 105–136 (QVNQ…QVSG). Composition is skewed to basic and acidic residues over residues 138 to 158 (TEER…ERRT) and 173 to 222 (RGSR…ERRP). Positions 226-242 (IDSGSSVPSDQSPSVQI) are enriched in low complexity. Positions 243 to 255 (DSGSSVPSDQRPS) are enriched in polar residues. Residues 339 to 348 (HYTESDQTDH) show a composition bias toward basic and acidic residues.

As to expression, testis-specific.

It localises to the nucleus. It is found in the cell projection. The protein resides in the cilium. The protein localises to the flagellum. This is Testis-specific expressed protein 55 from Homo sapiens (Human).